A 317-amino-acid chain; its full sequence is L-lactate dehydrogenase (317 aa).

NAD(+) is bound by residues V17, D38, K43, Y69, and 83–84; that span reads GA. The substrate site is built by Q86 and R92. Residues S105, 122–124, and S147 each bind NAD(+); that span reads ATN. Substrate is bound at residue 124 to 127; the sequence is NPVD. A substrate-binding site is contributed by 152 to 155; sequence DTAR. Positions 157 and 172 each coordinate beta-D-fructose 1,6-bisphosphate. H179 (proton acceptor) is an active-site residue. Position 224 is a phosphotyrosine (Y224). T233 provides a ligand contact to substrate.

The protein belongs to the LDH/MDH superfamily. LDH family. Homotetramer.

Its subcellular location is the cytoplasm. It catalyses the reaction (S)-lactate + NAD(+) = pyruvate + NADH + H(+). It functions in the pathway fermentation; pyruvate fermentation to lactate; (S)-lactate from pyruvate: step 1/1. Allosterically activated by fructose 1,6-bisphosphate (FBP). Its function is as follows. Catalyzes the conversion of lactate to pyruvate. The sequence is that of L-lactate dehydrogenase from Bacillus caldolyticus.